A 1010-amino-acid polypeptide reads, in one-letter code: Retinoblastoma-related protein 3 (1010 aa).

Positions 416–616 (TPVSTAMTTA…EKGSSMYNSL (201 aa)) are domain A. Residues 416–858 (TPVSTAMTTA…NEVFIPAVKS (443 aa)) form a pocket region. The spacer stretch occupies residues 617 to 727 (IVARPALSVE…PAAGGETCAE (111 aa)). The segment at 728–858 (TGIGVFFSKI…NEVFIPAVKS (131 aa)) is domain B. Disordered regions lie at residues 867-889 (ASAS…FPES) and 986-1010 (GSDR…PSDS).

The protein belongs to the retinoblastoma protein (RB) family.

It localises to the nucleus. Functionally, regulator of biological processes that recruits a histone deacetylase to control gene transcription. May play a role in the entry into mitosis, negatively regulating the cell proliferation. Formation of stable complexes with geminiviridae replication-associated proteins may create a cellular environment which favors viral DNA replication. This chain is Retinoblastoma-related protein 3 (RBR3), found in Zea mays (Maize).